A 336-amino-acid polypeptide reads, in one-letter code: Pyridoxal 5'-phosphate synthase subunit PdxS (336 aa).

D-ribose 5-phosphate is bound at residue D30. K87 serves as the catalytic Schiff-base intermediate with D-ribose 5-phosphate. G159 is a binding site for D-ribose 5-phosphate. Position 171 (R171) interacts with D-glyceraldehyde 3-phosphate. Residues G257 and G278–S279 each bind D-ribose 5-phosphate.

The protein belongs to the PdxS/SNZ family. In the presence of PdxT, forms a dodecamer of heterodimers.

It carries out the reaction aldehydo-D-ribose 5-phosphate + D-glyceraldehyde 3-phosphate + L-glutamine = pyridoxal 5'-phosphate + L-glutamate + phosphate + 3 H2O + H(+). It functions in the pathway cofactor biosynthesis; pyridoxal 5'-phosphate biosynthesis. Functionally, catalyzes the formation of pyridoxal 5'-phosphate from ribose 5-phosphate (RBP), glyceraldehyde 3-phosphate (G3P) and ammonia. The ammonia is provided by the PdxT subunit. Can also use ribulose 5-phosphate and dihydroxyacetone phosphate as substrates, resulting from enzyme-catalyzed isomerization of RBP and G3P, respectively. This is Pyridoxal 5'-phosphate synthase subunit PdxS from Thermoplasma acidophilum (strain ATCC 25905 / DSM 1728 / JCM 9062 / NBRC 15155 / AMRC-C165).